We begin with the raw amino-acid sequence, 472 residues long: Deoxyribodipyrimidine photo-lyase (472 aa).

One can recognise a Photolyase/cryptochrome alpha/beta domain in the interval Thr-2 to Ile-134. Residues Asn-109 and Glu-110 each contribute to the (6R)-5,10-methylene-5,6,7,8-tetrahydrofolate site. Tyr-223 is a binding site for FAD. Arg-227 serves as a coordination point for DNA. Residues Thr-235–Ser-239, Trp-272, and Glu-275–Tyr-282 each bind FAD. Interaction with DNA regions lie at residues Glu-275–Tyr-282 and Asn-342–Arg-343. Asp-373–Asp-375 is a binding site for FAD. Gln-405 provides a ligand contact to DNA.

The protein belongs to the DNA photolyase class-1 family. Monomer. It depends on FAD as a cofactor. (6R)-5,10-methylene-5,6,7,8-tetrahydrofolate is required as a cofactor.

It carries out the reaction cyclobutadipyrimidine (in DNA) = 2 pyrimidine residues (in DNA).. In terms of biological role, involved in repair of UV radiation-induced DNA damage. Catalyzes the light-dependent monomerization (300-600 nm) of cyclobutyl pyrimidine dimers (in cis-syn configuration), which are formed between adjacent bases on the same DNA strand upon exposure to ultraviolet radiation. This is Deoxyribodipyrimidine photo-lyase (phrB) from Escherichia coli (strain K12).